The chain runs to 182 residues: MFTGVQNYTQEVIKAAKYIGQGFTITLDHMNRLPVTIQYPYEKLIPSERFRGRIHFEFDKCIACEVCVRVCPINLPVVDWEFQKSIKKKQLKSYSIDFGVCIFCGNCVEYCPTNCLSMTEEYELSVYDRHELNYDHIALGRLPISSIKDPMVYGVNGLSYLEKNIIQDNTNKDTVTGPYNKE.

4Fe-4S ferredoxin-type domains lie at 52-81 (GRIHFEFDKCIACEVCVRVCPINLPVVDWE) and 92-121 (KSYSIDFGVCIFCGNCVEYCPTNCLSMTEE). The [4Fe-4S] cluster site is built by cysteine 61, cysteine 64, cysteine 67, cysteine 71, cysteine 101, cysteine 104, cysteine 107, and cysteine 111.

The protein belongs to the complex I 23 kDa subunit family. As to quaternary structure, NDH is composed of at least 16 different subunits, 5 of which are encoded in the nucleus. [4Fe-4S] cluster serves as cofactor.

It is found in the plastid. It localises to the chloroplast thylakoid membrane. It carries out the reaction a plastoquinone + NADH + (n+1) H(+)(in) = a plastoquinol + NAD(+) + n H(+)(out). The catalysed reaction is a plastoquinone + NADPH + (n+1) H(+)(in) = a plastoquinol + NADP(+) + n H(+)(out). Its function is as follows. NDH shuttles electrons from NAD(P)H:plastoquinone, via FMN and iron-sulfur (Fe-S) centers, to quinones in the photosynthetic chain and possibly in a chloroplast respiratory chain. The immediate electron acceptor for the enzyme in this species is believed to be plastoquinone. Couples the redox reaction to proton translocation, and thus conserves the redox energy in a proton gradient. The sequence is that of NAD(P)H-quinone oxidoreductase subunit I, chloroplastic from Chaetosphaeridium globosum (Charophycean green alga).